The sequence spans 878 residues: Pyruvate dehydrogenase phosphatase regulatory subunit, mitochondrial (878 aa).

Residues 1–26 (MLPRLLAVVRGPGSCRGWREGSPARG) constitute a mitochondrion transit peptide.

The protein belongs to the GcvT family. As to quaternary structure, heterodimer of a catalytic (PDP1) and a regulatory (PDPR) subunit.

Its subcellular location is the mitochondrion matrix. In terms of biological role, decreases the sensitivity of PDP1 to magnesium ions, and this inhibition is reversed by the polyamine spermine. This chain is Pyruvate dehydrogenase phosphatase regulatory subunit, mitochondrial (PDPR), found in Bos taurus (Bovine).